The sequence spans 515 residues: Proline--tRNA ligase (515 aa).

This sequence belongs to the class-II aminoacyl-tRNA synthetase family. ProS type 3 subfamily. As to quaternary structure, homodimer.

The protein localises to the cytoplasm. The enzyme catalyses tRNA(Pro) + L-proline + ATP = L-prolyl-tRNA(Pro) + AMP + diphosphate. In terms of biological role, catalyzes the attachment of proline to tRNA(Pro) in a two-step reaction: proline is first activated by ATP to form Pro-AMP and then transferred to the acceptor end of tRNA(Pro). This Novosphingobium aromaticivorans (strain ATCC 700278 / DSM 12444 / CCUG 56034 / CIP 105152 / NBRC 16084 / F199) protein is Proline--tRNA ligase.